The following is a 262-amino-acid chain: Hydroxyethylthiazole kinase (262 aa).

Residue Met-50 coordinates substrate. ATP contacts are provided by Arg-125 and Thr-171. Residue Gly-198 participates in substrate binding.

The protein belongs to the Thz kinase family. Mg(2+) serves as cofactor.

It carries out the reaction 5-(2-hydroxyethyl)-4-methylthiazole + ATP = 4-methyl-5-(2-phosphooxyethyl)-thiazole + ADP + H(+). It participates in cofactor biosynthesis; thiamine diphosphate biosynthesis; 4-methyl-5-(2-phosphoethyl)-thiazole from 5-(2-hydroxyethyl)-4-methylthiazole: step 1/1. Its function is as follows. Catalyzes the phosphorylation of the hydroxyl group of 4-methyl-5-beta-hydroxyethylthiazole (THZ). The protein is Hydroxyethylthiazole kinase of Escherichia coli O81 (strain ED1a).